The chain runs to 256 residues: 5'-nucleotidase SurE (256 aa).

Residues aspartate 8, aspartate 9, serine 40, and asparagine 92 each coordinate a divalent metal cation.

The protein belongs to the SurE nucleotidase family. It depends on a divalent metal cation as a cofactor.

The protein localises to the cytoplasm. It catalyses the reaction a ribonucleoside 5'-phosphate + H2O = a ribonucleoside + phosphate. Its function is as follows. Nucleotidase that shows phosphatase activity on nucleoside 5'-monophosphates. This is 5'-nucleotidase SurE from Rhizobium meliloti (strain 1021) (Ensifer meliloti).